The sequence spans 155 residues: Ribonuclease H (155 aa).

One can recognise an RNase H type-1 domain in the interval 1-142 (MLKQVEIFTD…CDVLARDAAS (142 aa)). Mg(2+) contacts are provided by D10, E48, D70, and D134.

The protein belongs to the RNase H family. In terms of assembly, monomer. Requires Mg(2+) as cofactor.

It is found in the cytoplasm. The enzyme catalyses Endonucleolytic cleavage to 5'-phosphomonoester.. Functionally, endonuclease that specifically degrades the RNA of RNA-DNA hybrids. The polypeptide is Ribonuclease H (Serratia proteamaculans (strain 568)).